We begin with the raw amino-acid sequence, 484 residues long: MFRSITQRVIRNNCYKQSTKSITSSTSFINNSLSYTTTSNENDIKDKNEEHDHRAKGKGRELLLSFDKSGLAQFPKQVFKNRKYPITDFEKYLQDITKVRGPMSIDTFIKEVLTNPKYGYYMNKDVFGKGGDFITAPEVSQLFGEMIGIWCVATWEAMGKPKKLQIVEMGPGRGTLMKDILRSTKVFKEFYDSISVHLVEASPANKKTQKQNLLYFKDKAINFDHKTIGETPNGIKVTWVGKLEEVPTDIPTLFLAQEFFDALPIHVFRFSREKNDWCEVLVDEDITEHGEYYLRFVQSKGPTLMTTAVKHLLPEFGLDGYQVELGLAGLAISQQIANRIDKSGGAALIIDYGYDKIVKSSLQAIRDHEFVDILDKPGTADLSVWVDFQTIRKTVKLLKNKSTAIGPVDQGIFLKEMGIEHRLAQIGRKLDSNEKFEELVMGYKKLVDPKEMGTNYKVITICDKNITPIGFSTSKTYDDEDLMI.

A mitochondrion-targeting transit peptide spans methionine 1–asparagine 12.

The protein belongs to the NDUFAF7 family. In terms of assembly, homodimer. Interacts with ndufs2.

The protein resides in the mitochondrion. It carries out the reaction L-arginyl-[protein] + 2 S-adenosyl-L-methionine = N(omega),N(omega)'-dimethyl-L-arginyl-[protein] + 2 S-adenosyl-L-homocysteine + 2 H(+). In terms of biological role, involved in the assembly or stability of mitochondrial NADH:ubiquinone oxidoreductase complex (complex I). Acts as an arginine methyltransferase and probably acts by mediating arginine methylation of ndufs2. The sequence is that of Protein arginine methyltransferase NDUFAF7 homolog, mitochondrial from Dictyostelium discoideum (Social amoeba).